The primary structure comprises 496 residues: NADP-dependent glyceraldehyde-3-phosphate dehydrogenase (496 aa).

Residues R116 and 169 to 170 (NY) contribute to the substrate site. Positions 192, 195, and 230 each coordinate NADP(+). Position 245 to 249 (245 to 249 (GGDTG)) interacts with NAD(+). The active-site Proton acceptor is the E264. 297–299 (RCT) provides a ligand contact to substrate. Catalysis depends on C298, which acts as the Nucleophile. NADP(+) is bound at residue E391. R451 contacts substrate.

The protein belongs to the aldehyde dehydrogenase family.

It localises to the cytoplasm. It is found in the cytosol. It carries out the reaction D-glyceraldehyde 3-phosphate + NADP(+) + H2O = (2R)-3-phosphoglycerate + NADPH + 2 H(+). Competitive inhibition by NADPH, 3-phospho-D-glycerate and ATP. In terms of biological role, important as a means of generating NADPH for biosynthetic reactions. May be a main source of cytosolic NADPH for mannitol biosynthesis in leaves. This is NADP-dependent glyceraldehyde-3-phosphate dehydrogenase from Apium graveolens (Celery).